The chain runs to 359 residues: 4-galactosyl-N-acetylglucosaminide 3-alpha-L-fucosyltransferase 9 (359 aa).

Topologically, residues 1–11 are cytoplasmic; it reads MTSTSKGILRP. Residues 12-32 form a helical; Signal-anchor for type II membrane protein membrane-spanning segment; it reads FLIVCVILACFMACLLIYIKP. Topologically, residues 33–359 are lumenal; that stretch reads TNSWVFSPME…VGNLEKWFWN (327 aa). An N-linked (GlcNAc...) asparagine glycan is attached at Asn62. The segment at 63–168 is acceptor-binding; sequence ETTILVWVWP…RRDSDIQVPY (106 aa). Residue Gln75 participates in a beta-D-galactosyl-(1-&gt;4)-N-acetyl-beta-D-glucosaminyl derivative binding. 3 cysteine pairs are disulfide-bonded: Cys82–Cys335, Cys91–Cys338, and Cys190–Cys238. An N-linked (GlcNAc...) asparagine glycan is attached at Asn101. Glu137 is a binding site for a beta-D-galactosyl-(1-&gt;4)-N-acetyl-beta-D-glucosaminyl derivative. Glu137 serves as the catalytic Nucleophile. Residue Glu137 coordinates GDP-beta-L-fucose. An N-linked (GlcNAc...) asparagine glycan is attached at Asn153. 11 residues coordinate GDP-beta-L-fucose: Tyr168, Val192, Ser194, Asn195, Arg202, Val226, Tyr241, Asn246, Tyr252, Glu255, and Lys256. The segment at 169 to 326 is donor-binding; the sequence is GFLTVSTNPF…NWRKDFTVNL (158 aa). An acceptor-binding region spans residues 327–359; sequence PRFWESHACLACDHVKRHQEYKSVGNLEKWFWN.

Belongs to the glycosyltransferase 10 family. In terms of assembly, homodimer. Post-translationally, N-glycosylated with complex-type N-glycans.

Its subcellular location is the golgi apparatus. It is found in the trans-Golgi network membrane. It localises to the golgi apparatus membrane. It catalyses the reaction a beta-D-galactosyl-(1-&gt;4)-N-acetyl-beta-D-glucosaminyl derivative + GDP-beta-L-fucose = a beta-D-galactosyl-(1-&gt;4)-[alpha-L-fucosyl-(1-&gt;3)]-N-acetyl-beta-D-glucosaminyl derivative + GDP + H(+). The enzyme catalyses an alpha-Neu5Ac-(2-&gt;3)-beta-D-Gal-(1-&gt;4)-beta-D-GlcNAc-(1-&gt;3)-beta-D-Gal-(1-&gt;4)-beta-D-GlcNAc derivative + GDP-beta-L-fucose = an alpha-Neu5Ac-(2-&gt;3)-beta-D-Gal-(1-&gt;4)-beta-D-GlcNAc-(1-&gt;3)-beta-D-Gal-(1-&gt;4)-[alpha-L-Fuc-(1-&gt;3)]-beta-D-GlcNAc derivative + GDP + H(+). It carries out the reaction alpha-N-glycoloylneuraminosyl-(2-&gt;3)-beta-D-galactosyl-(1-&gt;4)-N-acetyl-beta-D-glucosaminyl-(1-&gt;3)-beta-D-galactosyl-(1-&gt;4)-N-acetyl-beta-D-glucosaminyl-(1-&gt;3)-beta-D-galactosyl-(1-&gt;4)-beta-D-glucosyl-(1&lt;-&gt;1')-ceramide + GDP-beta-L-fucose = alpha-N-glycoloylneuraminosyl-(2-&gt;3)-beta-D-galactosyl-(1-&gt;4)-N-acetyl-beta-D-glucosaminyl-(1-&gt;3)-beta-D-galactosyl-(1-&gt;4)-[alpha-L-fucosyl-(1-&gt;3)]-N-acetyl-beta-D-glucosaminyl-(1-&gt;3)-beta-D-galactosyl-(1-&gt;4)-beta-D-glucosyl-(1&lt;-&gt;1')-ceramide + GDP + H(+). The catalysed reaction is alpha-D-galactosyl-(1-&gt;3)-beta-D-galactosyl-(1-&gt;4)-N-acetyl-beta-D-glucosaminyl-(1-&gt;3)-beta-D-galactosyl-(1-&gt;4)-beta-D-glucosyl-(1&lt;-&gt;1')-ceramide + GDP-beta-L-fucose = a neolactoside IV(3)-alpha-Gal,III(3)-alpha-Fuc-nLc4Cer + GDP + H(+). It catalyses the reaction a neolactoside nLc4Cer + GDP-beta-L-fucose = a neolactoside III(3)-alpha-Fuc-nLc4Cer + GDP + H(+). The enzyme catalyses an N-acetyl-alpha-neuraminyl-(2-&gt;3)-beta-D-galactosyl-(1-&gt;4)-N-acetyl-beta-D-glucosaminyl derivative + GDP-beta-L-fucose = an alpha-Neu5Ac-(2-&gt;3)-beta-D-Gal-(1-&gt;4)-[alpha-L-Fuc-(1-&gt;3)]-beta-D-GlcNAc derivative + GDP + H(+). It carries out the reaction beta-D-Gal-(1-&gt;4)-beta-D-GlcNAc-(1-&gt;3)-beta-D-Gal-(1-&gt;4)-D-Glc + GDP-beta-L-fucose = beta-D-Gal-(1-&gt;4)-[alpha-L-Fuc-(1-&gt;3)]-beta-D-GlcNAc-(1-&gt;3)-beta-D-Gal-(1-&gt;4)-D-Glc + GDP + H(+). The catalysed reaction is an alpha-L-Fuc-(1-&gt;2)-beta-D-Gal-(1-&gt;4)-beta-D-GlcNAc derivative + GDP-beta-L-fucose = an alpha-L-Fuc-(1-&gt;2)-beta-D-Gal-(1-&gt;4)-[alpha-L-Fuc-(1-&gt;3)]-beta-D-GlcNAc derivative + GDP + H(+). The protein operates within protein modification; protein glycosylation. It participates in glycolipid biosynthesis. With respect to regulation, activated by Mn2+. Catalyzes alpha(1-&gt;3) linkage of fucosyl moiety transferred from GDP-beta-L-fucose to N-acetyl glucosamine (GlcNAc) within type 2 lactosamine (LacNAc, beta-D-Gal-(1-&gt;4)-beta-D-GlcNAc-) glycan attached to glycolipids and N- or O-linked glycoproteins. Fucosylates distal type 2 LacNAc and its fucosylated (H-type 2 LacNAc) and sialylated (sialyl-type 2 LacNAc) derivatives to form Lewis x (Lex) (CD15) and Lewis y (Ley) antigenic epitopes involved in cell adhesion and differentiation. Generates Lex epitopes in the brain, presumably playing a role in the maintenance of neuronal stemness and neurite outgrowth in progenitor neural cells. Fucosylates the internal type 2 LacNAc unit of the polylactosamine chain to form VIM-2 antigen that serves as recognition epitope for SELE. Can also modify milk oligosaccharides in particular type 2 tetrasaccharide LNnT. The protein is 4-galactosyl-N-acetylglucosaminide 3-alpha-L-fucosyltransferase 9 of Cricetulus griseus (Chinese hamster).